Reading from the N-terminus, the 300-residue chain is Ribonuclease HIII (300 aa).

The 215-residue stretch at Arg86 to Ala300 folds into the RNase H type-2 domain. Asp92, Glu93, and Asp196 together coordinate a divalent metal cation.

It belongs to the RNase HII family. RnhC subfamily. Mn(2+) serves as cofactor. The cofactor is Mg(2+).

Its subcellular location is the cytoplasm. The enzyme catalyses Endonucleolytic cleavage to 5'-phosphomonoester.. Its function is as follows. Endonuclease that specifically degrades the RNA of RNA-DNA hybrids. The sequence is that of Ribonuclease HIII from Chlamydia caviae (strain ATCC VR-813 / DSM 19441 / 03DC25 / GPIC) (Chlamydophila caviae).